A 38-amino-acid chain; its full sequence is MKVRASVKKRSEDDIIVRRKGRIYVINKKNRRHNQRQG.

It belongs to the bacterial ribosomal protein bL36 family.

This is Large ribosomal subunit protein bL36 from Aster yellows witches'-broom phytoplasma (strain AYWB).